The primary structure comprises 331 residues: Cytoskeleton protein RodZ (331 aa).

Over 1 to 111 the chain is Cytoplasmic; it reads MNTEATQDHQ…LGKRRKKRDG (111 aa). An HTH cro/C1-type domain is found at 19-71; that stretch reads LRHAREQLGLSQQAVAERLCLKVSTVRDIEDDKAPADLASTFLRGYIRSYARL. Positions 30-49 form a DNA-binding region, H-T-H motif; sequence QQAVAERLCLKVSTVRDIED. Residues 112 to 132 form a helical; Signal-anchor for type II membrane protein membrane-spanning segment; it reads WLMSFTWLVLFVVIGLSGAWW. The Periplasmic segment spans residues 133-331; sequence WQDHKAQQEE…TLNAESSPAQ (199 aa). The span at 146–166 shows a compositional bias: polar residues; the sequence is MADQSSAELNGGDANSQNVPL. The segment at 146-238 is disordered; the sequence is MADQSSAELN…ASPLPTDQAN (93 aa). Low complexity-rich tracts occupy residues 167–202 and 216–234; these read DTSA…TPAD and TAGT…PLPT.

The protein belongs to the RodZ family.

It is found in the cell inner membrane. In terms of biological role, cytoskeletal protein that is involved in cell-shape control through regulation of the length of the long axis. This Klebsiella pneumoniae subsp. pneumoniae (strain ATCC 700721 / MGH 78578) protein is Cytoskeleton protein RodZ.